The sequence spans 84 residues: Large ribosomal subunit protein bL27 (84 aa).

Residues 1 to 20 (MAHKKAGGSTRNGRDSHSKR) form a disordered region.

The protein belongs to the bacterial ribosomal protein bL27 family.

The protein is Large ribosomal subunit protein bL27 of Blochmanniella pennsylvanica (strain BPEN).